The chain runs to 245 residues: Ribonuclease PH (245 aa).

Phosphate is bound by residues R87 and 125-127 (GTR).

This sequence belongs to the RNase PH family. Homohexameric ring arranged as a trimer of dimers.

It carries out the reaction tRNA(n+1) + phosphate = tRNA(n) + a ribonucleoside 5'-diphosphate. In terms of biological role, phosphorolytic 3'-5' exoribonuclease that plays an important role in tRNA 3'-end maturation. Removes nucleotide residues following the 3'-CCA terminus of tRNAs; can also add nucleotides to the ends of RNA molecules by using nucleoside diphosphates as substrates, but this may not be physiologically important. Probably plays a role in initiation of 16S rRNA degradation (leading to ribosome degradation) during starvation. This chain is Ribonuclease PH, found in Streptomyces coelicolor (strain ATCC BAA-471 / A3(2) / M145).